A 550-amino-acid polypeptide reads, in one-letter code: Hydroxylamine reductase (550 aa).

Positions 3, 6, 18, and 25 each coordinate [2Fe-2S] cluster. Positions 249, 273, 317, 405, 433, 458, 492, and 494 each coordinate hybrid [4Fe-2O-2S] cluster. C405 is modified (cysteine persulfide).

This sequence belongs to the HCP family. It depends on [2Fe-2S] cluster as a cofactor. Hybrid [4Fe-2O-2S] cluster serves as cofactor.

The protein resides in the cytoplasm. It carries out the reaction A + NH4(+) + H2O = hydroxylamine + AH2 + H(+). Its function is as follows. Catalyzes the reduction of hydroxylamine to form NH(3) and H(2)O. In Salmonella gallinarum (strain 287/91 / NCTC 13346), this protein is Hydroxylamine reductase.